Reading from the N-terminus, the 141-residue chain is Galactose-6-phosphate isomerase subunit LacA (141 aa).

The protein belongs to the LacAB/RpiB family. In terms of assembly, heteromultimeric protein consisting of LacA and LacB.

The catalysed reaction is aldehydo-D-galactose 6-phosphate = keto-D-tagatose 6-phosphate. Its pathway is carbohydrate metabolism; D-galactose 6-phosphate degradation; D-tagatose 6-phosphate from D-galactose 6-phosphate: step 1/1. In Streptococcus pneumoniae (strain ATCC 700669 / Spain 23F-1), this protein is Galactose-6-phosphate isomerase subunit LacA.